The following is a 600-amino-acid chain: uncharacterized protein (600 aa).

2 consecutive 4Fe-4S ferredoxin-type domains span residues 14–44 and 53–82; these read RLAI…MGEK and GKPV…IIGL. 2 ABC transporter domains span residues 77–318 and 348–563; these read ISII…YLYG and LLSY…LKEM. ATP is bound by residues 117–124 and 380–387; these read GQNGIGKS and GPNGIGKT. Residues 569-594 show a composition bias toward basic and acidic residues; sequence RDPETGRPRANKEGSQRDIMQKEKGE. The interval 569 to 600 is disordered; the sequence is RDPETGRPRANKEGSQRDIMQKEKGEYYYVDE.

The protein belongs to the ABC transporter superfamily.

This is an uncharacterized protein from Methanocaldococcus jannaschii (strain ATCC 43067 / DSM 2661 / JAL-1 / JCM 10045 / NBRC 100440) (Methanococcus jannaschii).